A 491-amino-acid chain; its full sequence is MPAVQLLLLACPVWDVGARTAQLRKANDRSGRCQYTFSVASPNESSCPEQSQAMSVIHNLQKDSSTQRLDLEATKARLSSLESLLHHQLTLDRAAGPQETPEGLQRELGTLRRERDQLETQTRELETAYSNLLRDKSVLEEEKKRLRQENENLARRLESSSQEVARLRRGQCPQTRDTARDVPPGSREVSTWNLDTLAFQELKSELTEVPASRILKESPSGHLQSREGDNGCGELVWVGEPLTLRTAETITGKYGVWMRDPKPTYPYTRETTWRIDTVGTDVRQVFEYDLISQFMQGYPSKVHILPRPLESTGAVVYSGNLYFQGAESRTVIRYELNTETVKAQKEIPGAGYHGQFPYSWGGYTDIDLAVDESGLWVIYSTDEAKGAIVLSKLNPENLELEQTWETNIRKQSVANAFIICGTLYTVSSYSSADATVNFAYDTGTGISKTLTIPFKNRYKYSSMIDYNPLEKKLFAWDNLNMVTYDIKLSKM.

Positions 1-18 (MPAVQLLLLACPVWDVGA) are cleaved as a signal peptide. Residue Asn43 is glycosylated (N-linked (GlcNAc...) asparagine). Residues 98-171 (QETPEGLQRE…QEVARLRRGQ (74 aa)) are a coiled coil. Residues 151 to 189 (ENLARRLESSSQEVARLRRGQCPQTRDTARDVPPGSREV) form a disordered region. The 260-residue stretch at 231-490 (GCGELVWVGE…MVTYDIKLSK (260 aa)) folds into the Olfactomedin-like domain. Cys232 and Cys420 form a disulfide bridge. Ca(2+) contacts are provided by Asp367, Asn415, Ala416, Ile464, and Asp465.

As to quaternary structure, homodimer (via N-terminus). Can also form higher oligomers. Interacts with OLFM3, FN1, NRCAM, GLDN and NFASC. Interacts (via N-terminus) with MYL2. Interacts with SFRP1, FRZB, FZD7, FZD10, FZD1 and WIF1; regulates Wnt signaling. Interacts with SNTA1; regulates muscle hypertrophy. Interacts with ERBB2 and ERBB3; activates ERBB2-ERBB3 signaling pathway. Interacts with SNCG; affects its secretion and its aggregation. In terms of processing, palmitoylated. Undergoes a calcium-dependent proteolytic cleavage at Arg-213 by CAPN2 in the endoplasmic reticulum. The result is the production of two fragments, one of 35 kDa containing the C-terminal olfactomedin-like domain, and another of 20 kDa containing the N-terminal leucine zipper-like domain. Post-translationally, glycosylated.

It localises to the secreted. The protein localises to the golgi apparatus. The protein resides in the cytoplasmic vesicle. Its subcellular location is the extracellular space. It is found in the extracellular matrix. It localises to the extracellular exosome. The protein localises to the mitochondrion. The protein resides in the mitochondrion intermembrane space. Its subcellular location is the mitochondrion inner membrane. It is found in the mitochondrion outer membrane. It localises to the rough endoplasmic reticulum. The protein localises to the cell projection. The protein resides in the cilium. Its subcellular location is the endoplasmic reticulum. Secreted glycoprotein regulating the activation of different signaling pathways in adjacent cells to control different processes including cell adhesion, cell-matrix adhesion, cytoskeleton organization and cell migration. Promotes substrate adhesion, spreading and formation of focal contacts. Negatively regulates cell-matrix adhesion and stress fiber assembly through Rho protein signal transduction. Modulates the organization of actin cytoskeleton by stimulating the formation of stress fibers through interactions with components of Wnt signaling pathways. Promotes cell migration through activation of PTK2 and the downstream phosphatidylinositol 3-kinase signaling. Plays a role in bone formation and promotes osteoblast differentiation in a dose-dependent manner through mitogen-activated protein kinase signaling. Mediates myelination in the peripheral nervous system through ERBB2/ERBB3 signaling. Plays a role as a regulator of muscle hypertrophy through the components of dystrophin-associated protein complex. Involved in positive regulation of mitochondrial depolarization. Plays a role in neurite outgrowth. May participate in the obstruction of fluid outflow in the trabecular meshwork. The polypeptide is Myocilin (MYOC) (Macaca fascicularis (Crab-eating macaque)).